Consider the following 130-residue polypeptide: Vascular-related unknown protein 3 (130 aa).

Residues 45-81 (DDSSMMSDAASPMGCVEEDTASSPSNRTEGYSGMEDN) form a disordered region.

Functionally, involved in the regulation of plant growth. The polypeptide is Vascular-related unknown protein 3 (Arabidopsis thaliana (Mouse-ear cress)).